Consider the following 1978-residue polypeptide: Centrosomal protein Cep290 (1978 aa).

Residues 1–650 are necessary and sufficient for function in ciliogenesis, transition zone (TZ) assembly, and recruitment of DZP1 and Mks1 to the TZ. Also required for subcellular localization to the cilium basal body; the sequence is MSMDIPETVS…SLCEVPEIAE (650 aa). Coiled coils occupy residues 76-384 and 471-505; these read DRRL…KSQQ and IERL…LQQD. The disordered stretch occupies residues 271 to 296; the sequence is QLEGKSISSGQTNSSNSQSQQEEEHA. A compositionally biased stretch (low complexity) spans 276 to 290; the sequence is SISSGQTNSSNSQSQ. The disordered stretch occupies residues 663–688; the sequence is ATRPSSPTEATMGLRRPTVPDPEEKP. Coiled-coil stretches lie at residues 853-887, 922-970, and 1192-1233; these read FEEQ…ANEQ, LAKV…TQQD, and ADAV…SRSE. Residues 1313 to 1324 show a composition bias toward basic and acidic residues; that stretch reads KEKLRQKPEVPV. The tract at residues 1313–1397 is disordered; it reads KEKLRQKPEV…EKQDTEELKE (85 aa). The span at 1329 to 1341 shows a compositional bias: low complexity; sequence STDSRSSSSSDSS. The span at 1379 to 1391 shows a compositional bias: acidic residues; sequence VTEEPEGEEEKQD. 2 coiled-coil regions span residues 1405–1439 and 1501–1654; these read IKDL…CQER and LNRT…LESK. Disordered regions lie at residues 1684–1714 and 1859–1884; these read VGVS…AHHH and LKDG…RLQQ. Residues 1693–1708 show a composition bias toward polar residues; sequence PSESPETYTGPSSECS. The stretch at 1726 to 1935 forms a coiled coil; that stretch reads IEALKSRIEL…KEQLVKKTQL (210 aa).

In terms of assembly, interacts (via N-terminus) with DZIP1. As to expression, expressed in sensory neurons type I and in germ cells (at protein level).

The protein resides in the cytoplasm. The protein localises to the cytoskeleton. It is found in the cilium basal body. It localises to the microtubule organizing center. Its subcellular location is the centrosome. The protein resides in the centriole. Functionally, essential for ciliogenesis in sensory neurons and spermatocytes. During neuron and spermatocyte ciliogenesis, essential for initiating transition zone (TZ) assembly and is required for the formation of diverse connections between microtubules and between microtubules and the membrane. Regulates TZ assembly by recruiting DZIP1 to the plasma membrane where it promotes early ciliary membrane formation resulting in the initiation of TZ assembly. The protein is Centrosomal protein Cep290 of Drosophila melanogaster (Fruit fly).